A 153-amino-acid polypeptide reads, in one-letter code: Small ribosomal subunit protein bS16 (153 aa).

Positions 130–153 (EAEAAAAAEEAPAEEAAEEAPAEA) are disordered. Residues 140-153 (APAEEAAEEAPAEA) are compositionally biased toward acidic residues.

It belongs to the bacterial ribosomal protein bS16 family.

This Bifidobacterium longum subsp. infantis (strain ATCC 15697 / DSM 20088 / JCM 1222 / NCTC 11817 / S12) protein is Small ribosomal subunit protein bS16.